The sequence spans 200 residues: Phospholipase A2 inhibitor CNF (200 aa).

The N-terminal stretch at 1–19 (MKYLHTICLLFIFVARGNS) is a signal peptide. Intrachain disulfides connect Cys22-Cys46, Cys25-Cys32, Cys39-Cys67, Cys73-Cys94, Cys95-Cys100, Cys118-Cys143, Cys136-Cys165, and Cys169-Cys191. A glycan (N-linked (GlcNAc...) asparagine; partial) is linked at Asn176.

As to quaternary structure, occurs as a mixture of oligomers. Tetrameric arrangement appears to be the predominant quaternary structure. Interacts with phospholipase A2 crotoxin basic subunit CBd; the interaction leads to dissociation of the CA-CB heterodimer and to inhibition of PLA2 activity of the CB subunit. The carbohydrate moiety increases the inhibition capacity of CNF, but is not essential for activity and for oligomerization. In terms of tissue distribution, expressed by the liver.

The protein localises to the secreted. Inhibits the PLA2 activity of crotoxin (CTX) by replacing the acid subunit (CA) in the CTX complex. Displays a pro-inflammatory action through activation of important main signaling pathways for human leukocytes, in vitro. Abolishes both the muscle-paralyzing and muscle-damaging activities of CTX in mice phrenic nerve-diaphragm muscle preparations. This is Phospholipase A2 inhibitor CNF from Crotalus durissus terrificus (South American rattlesnake).